A 415-amino-acid chain; its full sequence is Histidine--tRNA ligase (415 aa).

This sequence belongs to the class-II aminoacyl-tRNA synthetase family. As to quaternary structure, homodimer.

The protein resides in the cytoplasm. It carries out the reaction tRNA(His) + L-histidine + ATP = L-histidyl-tRNA(His) + AMP + diphosphate + H(+). In Gluconobacter oxydans (strain 621H) (Gluconobacter suboxydans), this protein is Histidine--tRNA ligase.